The following is a 407-amino-acid chain: Probable tRNA sulfurtransferase (407 aa).

The region spanning 61–165 (NEITYRLSKI…LDAIYMYEEV (105 aa)) is the THUMP domain. ATP contacts are provided by residues 183–184 (ML), 208–209 (HF), arginine 265, glycine 287, and glutamine 296.

It belongs to the ThiI family.

The protein resides in the cytoplasm. It carries out the reaction [ThiI sulfur-carrier protein]-S-sulfanyl-L-cysteine + a uridine in tRNA + 2 reduced [2Fe-2S]-[ferredoxin] + ATP + H(+) = [ThiI sulfur-carrier protein]-L-cysteine + a 4-thiouridine in tRNA + 2 oxidized [2Fe-2S]-[ferredoxin] + AMP + diphosphate. It catalyses the reaction [ThiS sulfur-carrier protein]-C-terminal Gly-Gly-AMP + S-sulfanyl-L-cysteinyl-[cysteine desulfurase] + AH2 = [ThiS sulfur-carrier protein]-C-terminal-Gly-aminoethanethioate + L-cysteinyl-[cysteine desulfurase] + A + AMP + 2 H(+). It functions in the pathway cofactor biosynthesis; thiamine diphosphate biosynthesis. Functionally, catalyzes the ATP-dependent transfer of a sulfur to tRNA to produce 4-thiouridine in position 8 of tRNAs, which functions as a near-UV photosensor. Also catalyzes the transfer of sulfur to the sulfur carrier protein ThiS, forming ThiS-thiocarboxylate. This is a step in the synthesis of thiazole, in the thiamine biosynthesis pathway. The sulfur is donated as persulfide by IscS. In Staphylococcus aureus (strain N315), this protein is Probable tRNA sulfurtransferase.